The following is a 414-amino-acid chain: Serine/threonine-protein kinase 32B (414 aa).

One can recognise a Protein kinase domain in the interval 23–283; the sequence is FQILRAIGKG…LHDIQSVPYL (261 aa). Residues 29 to 37 and K52 each bind ATP; that span reads IGKGSFGKV. The Proton acceptor role is filled by D146. The interval 374–396 is disordered; sequence QGQGSQLLDTDSRGGGQAQSKLQ.

Belongs to the protein kinase superfamily. Ser/Thr protein kinase family. Requires Mg(2+) as cofactor.

The catalysed reaction is L-seryl-[protein] + ATP = O-phospho-L-seryl-[protein] + ADP + H(+). It catalyses the reaction L-threonyl-[protein] + ATP = O-phospho-L-threonyl-[protein] + ADP + H(+). The protein is Serine/threonine-protein kinase 32B of Homo sapiens (Human).